The chain runs to 895 residues: Plasma membrane ATPase 1 (895 aa).

The tract at residues 1-53 is disordered; sequence MSATEPTNEKVDKIVSDDEDEDIDQLVADLQSNPGAGDEEEEEENDSSFKAVP. Residues 1-92 are Cytoplasmic-facing; the sequence is MSATEPTNEK…AEEQENLVLK (92 aa). Over residues 7–16 the composition is skewed to basic and acidic residues; that stretch reads TNEKVDKIVS. The segment covering 37-46 has biased composition (acidic residues); that stretch reads GDEEEEEEND. A helical membrane pass occupies residues 93 to 113; the sequence is FVMFFVGPIQFVMEAAAVLAA. The Extracellular segment spans residues 114–117; it reads GLED. Residues 118 to 137 traverse the membrane as a helical segment; that stretch reads WVDFGVICALLLLNAFVGFI. Topologically, residues 138 to 268 are cytoplasmic; it reads QEYQAGSIVD…GTGHFTEVLN (131 aa). A helical transmembrane segment spans residues 269–290; that stretch reads GIGTTLLVFVIVTLLVVWVACF. Topologically, residues 291–301 are extracellular; sequence YRTVRIVPILR. Residues 302-324 form a helical membrane-spanning segment; that stretch reads YTLAITIIGVPVGLPAVVTTTMA. The Cytoplasmic portion of the chain corresponds to 325–696; that stretch reads VGAAYLAKKQ…IAILNRSLDI (372 aa). Catalysis depends on Asp355, which acts as the 4-aspartylphosphate intermediate. Mg(2+) is bound by residues Asp611 and Asp615. The chain crosses the membrane as a helical span at residues 697 to 715; that stretch reads NLIVFIAIFADVATLAIAY. Residues 716–731 are Extracellular-facing; sequence DNAPYDPKPVKWNLPR. A helical membrane pass occupies residues 732 to 751; it reads LWGMSIVLGIILAIGTWITL. Residues 752 to 801 lie on the Cytoplasmic side of the membrane; the sequence is TTMLLPKGGIIQNFGGLDGILFLQISLTENWLIFVTRAQGPFWSSIPSWQ. Residues 802 to 822 form a helical membrane-spanning segment; the sequence is LSGAVLIVDIIATCFTLFGWW. Topologically, residues 823–834 are extracellular; it reads SQNWTDIVTVVR. Residues 835 to 851 traverse the membrane as a helical segment; it reads TWIWSFGVFCVMGGAYY. Topologically, residues 852–895 are cytoplasmic; sequence LMSTSEAFDNFCNGRKPQQHTDKRSLEDFLVSMQRVSTQHEKST.

It belongs to the cation transport ATPase (P-type) (TC 3.A.3) family. Type IIIA subfamily.

The protein localises to the cell membrane. It catalyses the reaction ATP + H2O + H(+)(in) = ADP + phosphate + 2 H(+)(out). The plasma membrane ATPase of plants and fungi is a hydrogen ion pump. The proton gradient it generates drives the active transport of nutrients by H(+)-symport. The resulting external acidification and/or internal alkinization may mediate growth responses. In Candida albicans (Yeast), this protein is Plasma membrane ATPase 1 (PMA1).